Here is a 289-residue protein sequence, read N- to C-terminus: MRKFTAFACGTGAGLLTFYLTKLNEPKAAVHNSWTRSEKPVDPCALWDHNWDLRDPKSLVKPVKNDLSQEQNRYNSELEKVVPKHARHIILIRHGEYLDVGDTDETHHLTERGREQAKYTGKRLCELGIKWDKVIASTMVRAQETADIILNEIDYEKAKVKNCAFLREGAPIPPQPPVGHWKPEASQFFRDGARIEAAFRRYFYRAYPDQTKDSYTLLVGHGNVIRYFVCRALQFPPEAWLRISINHASITWLTISPSGNVSIKYLGDTGFMPVNHLTNRIPRAAKNVV.

Residues 7–23 (FACGTGAGLLTFYLTKL) form a helical membrane-spanning segment.

This sequence belongs to the phosphoglycerate mutase family. BPG-dependent PGAM subfamily. As to quaternary structure, interacts with Pk92B/ASK1.

It is found in the mitochondrion outer membrane. The enzyme catalyses O-phospho-L-seryl-[protein] + H2O = L-seryl-[protein] + phosphate. The catalysed reaction is O-phospho-L-threonyl-[protein] + H2O = L-threonyl-[protein] + phosphate. In terms of biological role, displays phosphatase activity for serine/threonine residues, and dephosphorylates and activates Pk92B kinase. Has apparently no phosphoglycerate mutase activity. The protein is Serine/threonine-protein phosphatase Pgam5, mitochondrial (Pgam5) of Drosophila pseudoobscura pseudoobscura (Fruit fly).